A 580-amino-acid polypeptide reads, in one-letter code: Alpha-thujene synthase, chloroplastic (580 aa).

Residues 1–32 (MALQLLTPSFSFQHSPSPHKLTTLRYTHHRIR) constitute a chloroplast transit peptide. Arg-296, Asp-333, Asp-337, Arg-473, and Asp-476 together coordinate (2E)-geranyl diphosphate. Mg(2+) is bound by residues Asp-333 and Asp-337. Positions 333–337 (DDVYD) match the DDXXD motif motif. Residues Asp-476, Thr-480, and Glu-484 each coordinate Mg(2+).

This sequence belongs to the terpene synthase family. Tpsb subfamily. Monomer. It depends on Mg(2+) as a cofactor. Mn(2+) serves as cofactor. As to expression, expressed in developing and mature fruits. Barely detectable in leaves and shoots.

The protein localises to the plastid. Its subcellular location is the chloroplast. It carries out the reaction (2E)-geranyl diphosphate = alpha-thujene + diphosphate. It participates in secondary metabolite biosynthesis; terpenoid biosynthesis. Its function is as follows. Monoterpene synthase (TPS) involved in the biosynthesis of monoterpene natural products used by traditional Chinese medicine to treat headache, inflammation and intoxication. Catalyzes the conversion of (2E)-geranyl diphosphate (GPP) into alpha-thujene. The sequence is that of Alpha-thujene synthase, chloroplastic from Litsea cubeba (Aromatic litsea).